Reading from the N-terminus, the 190-residue chain is RNA pyrophosphohydrolase (190 aa).

The Nudix hydrolase domain occupies 6–149; sequence GYRPNVGIVL…KRSVYARALC (144 aa). The short motif at 38-59 is the Nudix box element; it reads GGMHSDETPVEAMYRELNEETG.

The protein belongs to the Nudix hydrolase family. RppH subfamily. A divalent metal cation serves as cofactor.

Accelerates the degradation of transcripts by removing pyrophosphate from the 5'-end of triphosphorylated RNA, leading to a more labile monophosphorylated state that can stimulate subsequent ribonuclease cleavage. The polypeptide is RNA pyrophosphohydrolase (Xylella fastidiosa (strain Temecula1 / ATCC 700964)).